A 222-amino-acid chain; its full sequence is Glutathione S-transferase alpha M14 (222 aa).

At Met-1 the chain carries N-acetylmethionine. N-acetylalanine; in Glutathione S-transferase alpha M14, N-terminally processed is present on Ala-2. One can recognise a GST N-terminal domain in the interval 3–83 (GKPILHYFNG…YIATKYNLYG (81 aa)). The residue at position 4 (Lys-4) is an N6-succinyllysine. Residues Tyr-9, 54-55 (QV), and 67-68 (QT) contribute to the glutathione site. A GST C-terminal domain is found at 85–208 (DAKERALIDM…QPGSQRKPPM (124 aa)). The disordered stretch occupies residues 199–222 (QPGSQRKPPMDAKKIRRSQEYFPD). Positions 206–222 (PPMDAKKIRRSQEYFPD) are enriched in basic and acidic residues.

It belongs to the GST superfamily. Alpha family. In terms of assembly, homodimer or heterodimer of GSTA1 and GSTA2.

Its subcellular location is the cytoplasm. It carries out the reaction RX + glutathione = an S-substituted glutathione + a halide anion + H(+). It catalyses the reaction prostaglandin A2 + glutathione = prostaglandin A2-S-(R)-glutathione. The enzyme catalyses prostaglandin J2 + glutathione = prostaglandin J2-S-(R)-glutathione. The catalysed reaction is (13S)-hydroperoxy-(9Z,11E)-octadecadienoate + 2 glutathione = (13S)-hydroxy-(9Z,11E)-octadecadienoate + glutathione disulfide + H2O. It carries out the reaction androst-5-ene-3,17-dione = androst-4-ene-3,17-dione. Glutathione S-transferase that catalyzes the nucleophilic attack of the sulfur atom of glutathione on the electrophilic groups of a wide range of exogenous and endogenous compounds. Involved in the formation of glutathione conjugates of both prostaglandin A2 (PGA2) and prostaglandin J2 (PGJ2). It also catalyzes the isomerization of D5-androstene-3,17-dione (AD) into D4-androstene-3,17-dione and may therefore play an important role in hormone biosynthesis. Through its glutathione-dependent peroxidase activity toward the fatty acid hydroperoxide (13S)-hydroperoxy-(9Z,11E)-octadecadienoate/13-HPODE it is also involved in the metabolism of oxidized linoleic acid. The chain is Glutathione S-transferase alpha M14 from Sus scrofa (Pig).